Here is a 300-residue protein sequence, read N- to C-terminus: MKTNKIVFIFGPTAVGKSDILFHFPKGVAEVISVDSIQVYKEFDIASCKPSIELRSHIRHHLVDFLEPIYEYNLGIFYKESCKIIESLREQKKIPIFVGGSAFYFKHLKYGLPSAPPVSEKVRLYINNLFIKMGKDYLLEELRRVDFKRYESINQNDIYRIKRSLEVYYQTGIPISQFLQRENMFENIVAIGLRRPMDEMKSRIISRVKNMIDCGLLDEIKSLLGKGYDEKTPAFKGIGYREFLLWRSRPCYLLNDIINLIVKNSFLYVKRQMTFFNKLPNVLWFHPDDDLKNILDLIFV.

An ATP-binding site is contributed by 11-18 (GPTAVGKS). Position 13-18 (13-18 (TAVGKS)) interacts with substrate. The interval 35–38 (DSIQ) is interaction with substrate tRNA.

The protein belongs to the IPP transferase family. As to quaternary structure, monomer. The cofactor is Mg(2+).

It catalyses the reaction adenosine(37) in tRNA + dimethylallyl diphosphate = N(6)-dimethylallyladenosine(37) in tRNA + diphosphate. Catalyzes the transfer of a dimethylallyl group onto the adenine at position 37 in tRNAs that read codons beginning with uridine, leading to the formation of N6-(dimethylallyl)adenosine (i(6)A). The chain is tRNA dimethylallyltransferase from Borrelia duttonii (strain Ly).